A 177-amino-acid chain; its full sequence is Transmembrane protein 190 (177 aa).

The N-terminal stretch at 1 to 21 (MLGCGIPALGLLLLLQGSADG) is a signal peptide. Over 22-81 (NGIQGFFYPWSCEGDIWDRESCGGQAAIDSPNLCLRLRCCYRNGVCYHQRPDENVRRKHM) the chain is Extracellular. A P-type domain is found at 31–71 (WSCEGDIWDRESCGGQAAIDSPNLCLRLRCCYRNGVCYHQR). Cystine bridges form between cysteine 33–cysteine 61, cysteine 43–cysteine 60, and cysteine 55–cysteine 67. A helical transmembrane segment spans residues 82–102 (WALVWTCSGLLLLSCSICLFW). At 103-177 (WAKRRDVLHM…EETEGEEEED (75 aa)) the chain is on the cytoplasmic side. Positions 131 to 177 (KHRGTKKTPSTGSVPVALSKESRDVEGGTEGEGTEEGEETEGEEEED) are disordered. Positions 157-177 (GGTEGEGTEEGEETEGEEEED) are enriched in acidic residues.

It is found in the membrane. This Homo sapiens (Human) protein is Transmembrane protein 190 (TMEM190).